The following is a 306-amino-acid chain: ADP-polyphosphate phosphotransferase 2 (306 aa).

It belongs to the polyphosphate kinase 2 (PPK2) family. Class I subfamily.

The catalysed reaction is [phosphate](n) + ATP = [phosphate](n+1) + ADP. It catalyses the reaction [phosphate](n) + GTP = [phosphate](n+1) + GDP. Its function is as follows. Uses inorganic polyphosphate (polyP) as a donor to convert ADP to ATP. Can also convert GDP to GTP, with lower efficiency. In Rhizobium meliloti (strain 1021) (Ensifer meliloti), this protein is ADP-polyphosphate phosphotransferase 2.